The sequence spans 243 residues: Type III pantothenate kinase (243 aa).

6–13 (DGGNTFIK) is an ATP binding site. Substrate-binding positions include Tyr-87 and 94 to 97 (GKDR). Asp-96 functions as the Proton acceptor in the catalytic mechanism. K(+) is bound at residue Asp-117. Position 120 (Thr-120) interacts with ATP. Thr-172 contributes to the substrate binding site.

It belongs to the type III pantothenate kinase family. Homodimer. It depends on NH4(+) as a cofactor. K(+) serves as cofactor.

The protein localises to the cytoplasm. It catalyses the reaction (R)-pantothenate + ATP = (R)-4'-phosphopantothenate + ADP + H(+). It participates in cofactor biosynthesis; coenzyme A biosynthesis; CoA from (R)-pantothenate: step 1/5. Its function is as follows. Catalyzes the phosphorylation of pantothenate (Pan), the first step in CoA biosynthesis. This Christiangramia forsetii (strain DSM 17595 / CGMCC 1.15422 / KT0803) (Gramella forsetii) protein is Type III pantothenate kinase.